Here is a 100-residue protein sequence, read N- to C-terminus: A-type ATP synthase subunit F (100 aa).

Belongs to the V-ATPase F subunit family. As to quaternary structure, has multiple subunits with at least A(3), B(3), C, D, E, F, H, I and proteolipid K(x).

It is found in the cell membrane. Functionally, component of the A-type ATP synthase that produces ATP from ADP in the presence of a proton gradient across the membrane. The sequence is that of A-type ATP synthase subunit F from Methanospirillum hungatei JF-1 (strain ATCC 27890 / DSM 864 / NBRC 100397 / JF-1).